The sequence spans 363 residues: 3-dehydroquinate synthase (363 aa).

Residues 109–113, 133–134, Lys-146, and Lys-155 contribute to the NAD(+) site; these read GASTD and TT. Residues Glu-188, His-251, and His-267 each coordinate Zn(2+).

This sequence belongs to the sugar phosphate cyclases superfamily. Dehydroquinate synthase family. It depends on NAD(+) as a cofactor. Co(2+) is required as a cofactor. Zn(2+) serves as cofactor.

Its subcellular location is the cytoplasm. The catalysed reaction is 7-phospho-2-dehydro-3-deoxy-D-arabino-heptonate = 3-dehydroquinate + phosphate. The protein operates within metabolic intermediate biosynthesis; chorismate biosynthesis; chorismate from D-erythrose 4-phosphate and phosphoenolpyruvate: step 2/7. Functionally, catalyzes the conversion of 3-deoxy-D-arabino-heptulosonate 7-phosphate (DAHP) to dehydroquinate (DHQ). The protein is 3-dehydroquinate synthase of Streptomyces coelicolor (strain ATCC BAA-471 / A3(2) / M145).